A 1316-amino-acid chain; its full sequence is Myosin-5 (1316 aa).

Basic residues predominate over residues 1–12; sequence MAIVKRGGRTKT. Positions 1–29 are disordered; that stretch reads MAIVKRGGRTKTKQQQVPAKSSGGGSSGG. Residues 43 to 731 enclose the Myosin motor domain; the sequence is VGVSDLTLLS…TLFALEDMRD (689 aa). An ATP-binding site is contributed by 136–143; sequence GESGAGKT. Phosphoserine is present on serine 366. The tract at residues 414–497 is actin-binding; it reads SIGILDIYGF…PGLFAALNDS (84 aa). IQ domains are found at residues 735–755 and 756–781; these read HNMAARIQRAWRRYVKRKEDA and AKTIQNAWRIKKHGNQFEQFRDYGNG. In terms of domain architecture, TH1 spans 789–981; that stretch reads RRRMSMLGSR…TVSVKQGLPA (193 aa). Disordered regions lie at residues 964-1154 and 1209-1316; these read NGDH…PTLV and DYLK…DDDW. 2 stretches are compositionally biased toward polar residues: residues 971–984 and 1018–1030; these read GTVSVKQGLPASSK and PRYNQPTPVANSG. Residues 1042-1065 show a composition bias toward low complexity; sequence QPQQYQPQQSQQQTPYPTQSSIPS. A compositionally biased stretch (polar residues) spans 1097–1106; the sequence is SPTQQRQTPA. Low complexity predominate over residues 1117–1129; that stretch reads ASTTIATTTSHTS. Residues 1137 to 1153 show a composition bias toward pro residues; it reads PAPPVKKTAPPPPPPTL. The SH3 domain maps to 1156–1216; the sequence is PKFPTYKAMF…PIDYLKECSP (61 aa). Positions 1223 to 1232 are enriched in pro residues; that stretch reads APPPPPPPPA. A compositionally biased stretch (low complexity) spans 1233-1268; it reads ATASAGANGASNPISTTTSTNTTTSSHTTNATSNGS. Positions 1305–1316 are enriched in acidic residues; that stretch reads SDDEEEEDDDDW.

It belongs to the TRAFAC class myosin-kinesin ATPase superfamily. Myosin family. In terms of processing, phosphorylation of the TEDS site (Ser-366) is required for the polarization of the actin cytoskeleton. Phosphorylation probably activates the myosin-I ATPase activity.

The protein localises to the cytoplasm. It localises to the cytoskeleton. Its subcellular location is the actin patch. Type-I myosin implicated in the organization of the actin cytoskeleton. Required for proper actin cytoskeleton polarization and for the internalization step in endocytosis. At the cell cortex, assembles in patch-like structures together with proteins from the actin-polymerizing machinery and promotes actin assembly. Functions as actin nucleation-promoting factor (NPF) for the Arp2/3 complex. Plays a role in chitin deposition in the cell wall, in determination of the budding pattern, and is required for hyphae formation. The sequence is that of Myosin-5 (MYO5) from Candida albicans (strain SC5314 / ATCC MYA-2876) (Yeast).